The sequence spans 154 residues: Snaclec salmorin subunit A (154 aa).

Positions 1–23 are cleaved as a signal peptide; that stretch reads MGRFIFVSFGLLVVFLSLSGTGA. 3 disulfide bridges follow: cysteine 27-cysteine 38, cysteine 55-cysteine 152, and cysteine 127-cysteine 144. In terms of domain architecture, C-type lectin spans 34–153; the sequence is NNGHCYQAFN…CGQRNPFVCE (120 aa). Residues serine 66, glutamate 68, and glutamate 72 each coordinate Ca(2+). Glutamate 153 lines the Ca(2+) pocket.

The protein belongs to the snaclec family. As to quaternary structure, heterodimer of subunits A and B; disulfide-linked. As to expression, expressed by the venom gland.

It is found in the secreted. Inhibits thrombin-induced fibrinogen clotting and factor Xa-induced prothrombin activation. Binds to thrombin and prothrombin exosites. The sequence is that of Snaclec salmorin subunit A from Gloydius brevicauda (Korean slamosa snake).